We begin with the raw amino-acid sequence, 150 residues long: MRKLVAGKLHGIHVTEANLNYHGSITLDPDHCEAAGILPMEFVEIWNKNSGARISTYVILGERGSRCCILNGAAARTCQPDDPIIVCNSIYLDEAHITSLKPRIVTFDQDNHILDRLSYSVDIDTDGRYSFAILDEADEPLVIPALVSGA.

Catalysis depends on Ser24, which acts as the Schiff-base intermediate with substrate; via pyruvic acid. Ser24 is modified (pyruvic acid (Ser)). Residue Thr56 coordinates substrate. Tyr57 (proton donor) is an active-site residue. 72–74 lines the substrate pocket; the sequence is GAA.

It belongs to the PanD family. In terms of assembly, heterooctamer of four alpha and four beta subunits. It depends on pyruvate as a cofactor. In terms of processing, is synthesized initially as an inactive proenzyme, which is activated by self-cleavage at a specific serine bond to produce a beta-subunit with a hydroxyl group at its C-terminus and an alpha-subunit with a pyruvoyl group at its N-terminus.

The protein localises to the cytoplasm. The catalysed reaction is L-aspartate + H(+) = beta-alanine + CO2. Its pathway is cofactor biosynthesis; (R)-pantothenate biosynthesis; beta-alanine from L-aspartate: step 1/1. Its function is as follows. Catalyzes the pyruvoyl-dependent decarboxylation of aspartate to produce beta-alanine. This Mesorhizobium japonicum (strain LMG 29417 / CECT 9101 / MAFF 303099) (Mesorhizobium loti (strain MAFF 303099)) protein is Aspartate 1-decarboxylase 1.